Here is a 384-residue protein sequence, read N- to C-terminus: S-adenosylmethionine synthase (384 aa).

Position 15 (His-15) interacts with ATP. Position 17 (Asp-17) interacts with Mg(2+). Glu-43 is a binding site for K(+). L-methionine contacts are provided by Glu-56 and Gln-99. The segment at Gln-99–Arg-109 is flexible loop. ATP contacts are provided by residues Asp-164–Lys-166, Arg-230–Phe-231, Asp-239, Arg-245–Lys-246, Ala-262, and Lys-266. L-methionine is bound at residue Asp-239. Lys-270 contacts L-methionine.

The protein belongs to the AdoMet synthase family. In terms of assembly, homotetramer; dimer of dimers. The cofactor is Mg(2+). K(+) serves as cofactor.

The protein resides in the cytoplasm. The enzyme catalyses L-methionine + ATP + H2O = S-adenosyl-L-methionine + phosphate + diphosphate. It participates in amino-acid biosynthesis; S-adenosyl-L-methionine biosynthesis; S-adenosyl-L-methionine from L-methionine: step 1/1. Functionally, catalyzes the formation of S-adenosylmethionine (AdoMet) from methionine and ATP. The overall synthetic reaction is composed of two sequential steps, AdoMet formation and the subsequent tripolyphosphate hydrolysis which occurs prior to release of AdoMet from the enzyme. This is S-adenosylmethionine synthase from Yersinia enterocolitica serotype O:8 / biotype 1B (strain NCTC 13174 / 8081).